Reading from the N-terminus, the 71-residue chain is Large ribosomal subunit protein bL31 (71 aa).

Zn(2+) is bound by residues Cys16, Cys18, Cys37, and Cys40.

Belongs to the bacterial ribosomal protein bL31 family. Type A subfamily. In terms of assembly, part of the 50S ribosomal subunit. Zn(2+) serves as cofactor.

Its function is as follows. Binds the 23S rRNA. This Pectobacterium atrosepticum (strain SCRI 1043 / ATCC BAA-672) (Erwinia carotovora subsp. atroseptica) protein is Large ribosomal subunit protein bL31.